A 428-amino-acid chain; its full sequence is Succinyl-CoA--L-malate CoA-transferase alpha subunit (428 aa).

Residues M1–Q31 are disordered. A compositionally biased stretch (polar residues) spans P21–Q31. The Nucleophile role is filled by D200.

It belongs to the CoA-transferase III family. As to quaternary structure, forms a large complex composed of six heterodimers (alpha, beta).

The enzyme catalyses succinyl-CoA + (S)-malate = (S)-malyl-CoA + succinate. It carries out the reaction (3S)-citramalate + succinyl-CoA = (3S)-citramalyl-CoA + succinate. In terms of biological role, involved in the 3-hydroxypropionate cycle used for autotrophic carbon dioxide fixation. Catalyzes the transfer of CoA moiety from succinyl-CoA to L-malate to yield L-malyl-CoA. It is highly specific for succinyl-CoA as the CoA donor, however it can accept L-citramalate instead of L-malate as the CoA acceptor. In Chloroflexus aurantiacus, this protein is Succinyl-CoA--L-malate CoA-transferase alpha subunit (smtA).